The primary structure comprises 382 residues: 8-amino-7-oxononanoate synthase (382 aa).

Residue R26 coordinates substrate. 104–105 (GY) serves as a coordination point for pyridoxal 5'-phosphate. H129 contacts substrate. Pyridoxal 5'-phosphate is bound by residues S175, 200 to 203 (DEAH), and 232 to 235 (TLSK). N6-(pyridoxal phosphate)lysine is present on K235. T345 serves as a coordination point for substrate.

Belongs to the class-II pyridoxal-phosphate-dependent aminotransferase family. BioF subfamily. As to quaternary structure, homodimer. It depends on pyridoxal 5'-phosphate as a cofactor.

It carries out the reaction 6-carboxyhexanoyl-[ACP] + L-alanine + H(+) = (8S)-8-amino-7-oxononanoate + holo-[ACP] + CO2. It participates in cofactor biosynthesis; biotin biosynthesis. Catalyzes the decarboxylative condensation of pimeloyl-[acyl-carrier protein] and L-alanine to produce 8-amino-7-oxononanoate (AON), [acyl-carrier protein], and carbon dioxide. The polypeptide is 8-amino-7-oxononanoate synthase (Mycobacterium sp. (strain KMS)).